A 106-amino-acid polypeptide reads, in one-letter code: Small ribosomal subunit protein uS10 (106 aa).

The protein belongs to the universal ribosomal protein uS10 family. Part of the 30S ribosomal subunit.

Its function is as follows. Involved in the binding of tRNA to the ribosomes. This Pyrobaculum calidifontis (strain DSM 21063 / JCM 11548 / VA1) protein is Small ribosomal subunit protein uS10.